We begin with the raw amino-acid sequence, 465 residues long: Argininosuccinate lyase (465 aa).

Belongs to the lyase 1 family. Argininosuccinate lyase subfamily.

It localises to the cytoplasm. It catalyses the reaction 2-(N(omega)-L-arginino)succinate = fumarate + L-arginine. It functions in the pathway amino-acid biosynthesis; L-arginine biosynthesis; L-arginine from L-ornithine and carbamoyl phosphate: step 3/3. This chain is Argininosuccinate lyase, found in Clostridium botulinum (strain Eklund 17B / Type B).